A 691-amino-acid chain; its full sequence is DNA ligase (691 aa).

NAD(+) is bound by residues 41-45, 90-91, and E130; these read DAEYD and SL. The N6-AMP-lysine intermediate role is filled by K132. NAD(+)-binding residues include R153, E190, K307, and K331. Zn(2+) contacts are provided by C425, C428, C443, and C449. Positions 610 to 691 constitute a BRCT domain; sequence APQGVLAGKT…LHQLLEGNTP (82 aa).

The protein belongs to the NAD-dependent DNA ligase family. LigA subfamily. Mg(2+) is required as a cofactor. Requires Mn(2+) as cofactor.

It catalyses the reaction NAD(+) + (deoxyribonucleotide)n-3'-hydroxyl + 5'-phospho-(deoxyribonucleotide)m = (deoxyribonucleotide)n+m + AMP + beta-nicotinamide D-nucleotide.. Its function is as follows. DNA ligase that catalyzes the formation of phosphodiester linkages between 5'-phosphoryl and 3'-hydroxyl groups in double-stranded DNA using NAD as a coenzyme and as the energy source for the reaction. It is essential for DNA replication and repair of damaged DNA. This is DNA ligase from Burkholderia cenocepacia (strain HI2424).